The sequence spans 935 residues: MSGNNIKVVCRFRPQNSLEIREGGTPIIDIDPEGTQLELKGKEFKGNFNFDKVFGMNTAQKDVFDYSIKTIVDDVTAGYNGTVFAYGQTGSGKTFTMMGADIDDEKTKGIIPRIVEQIFDSIMASPSNLEFTVKVSYMEIYMEKVRDLLNPSSENLPIHEDKTKGVYVKGLLEVYVGSTDEVYEVMRRGSNNRVVAYTNMNAESSRSHSIVMFTITQKNVDTGAAKSGKLYLVDLAGSEKVGKTGASGQTLEEAKKINKSLTALGMVINALTDGKSSHVPYRDSKLTRILQESLGGNSRTTLIINCSPSSYNEAETLSTLRFGARAKSIKNKAKVNADLSPAELKALLKKVKSEAVTYQTYIAALEGEVNVWRTGGTVPEGKWVTMDKVSKGDFAGLPPAPGFKSPVSDEGSRPATPVPTLEKDEREEFIKRENELMDQISEKETELTNREKLLESLREEMGYYKEQEQSVTKENQQMTSELSELRLQLQKVSYESKENAITVDSLKEANQDLMAELEELKKNLSEMRQAHKDATDSDKEKRKAEKMAQMMSGFDPSGILNDKERQIRNALSKLDGEQQQTLTVEDLVSLRRELAESKMLVEQHTKTISDLSADKDAMEAKKIELEGRLGALEKEYEELLDKTIAEEEANMQNADVDNLSALKTKLEAQYAEKKEVQQKEIDDLKRELDRKQSGHEKLSAAMTDLRAANDQLQAALSEQPFQAPQDNSDMTEKEKDIERTRKSMAQQLADFEVMKKALMRDLQNRCEKVVELEMSLDETREQYNNVLRASNNKAQQKKMAFLERNLEQLTNVQKQLVEQNASLKKEVALAERKLIARNERIQSLETLLHNAQDKLLNQNKKFEQQLATVRERLEQARSQKSQNSLAALNFSRIAKPLRGNGAAIDNGSDDGSLPTSPTDKRDKRSSWMPGFMNSR.

One can recognise a Kinesin motor domain in the interval 5-329 (NIKVVCRFRP…LRFGARAKSI (325 aa)). Residues 87–94 (GQTGSGKT) and 237–244 (GSEKVGKT) contribute to the ATP site. A coiled-coil region spans residues 342–887 (AELKALLKKV…SQKSQNSLAA (546 aa)). 2 disordered regions span residues 400 to 419 (APGFKSPVSDEGSRPATPVP) and 898 to 935 (RGNGAAIDNGSDDGSLPTSPTDKRDKRSSWMPGFMNSR).

The protein belongs to the TRAFAC class myosin-kinesin ATPase superfamily. Kinesin family. Kinesin subfamily.

Its subcellular location is the cytoplasm. The protein localises to the cytoskeleton. Functionally, kinesin is a microtubule-associated force-producing protein that may play a role in organelle transport. Its motor activity is directed toward the microtubule's plus end. The speed of this motor is 4-5 times faster than its animal counterparts. The polypeptide is Kinesin heavy chain (Syncephalastrum racemosum (Filamentous fungus)).